Here is a 451-residue protein sequence, read N- to C-terminus: MSRIERIFAREILDSRGTPTVEVEVWTEFGGYGCAKAPSGASTGVNEALELRDGDKARYNGKGVLKAVKNVNEIIAPKLIGVDALDQLTVDRIMLDLDGTEFKTKLGANGILAVSLAVAKSAASELDIPLYKYLGGVQAKKLPVPMLNVINGGEHADSAIDFQEFMIMPVGAKSFSEALRWSSETFQALKSLLKSKKDITAVGDEGGFAPNFEWAYEKHDLKSFKAKTPAEIALDLLVEAIKKAGYKPGKDGIMIAMDCASSELYLEDKKYHFKKIEKVTNQEWSLTTDEMISYLEKLVDNYPIISIEDGLAETDWEGFTKLTQKIGDKVQIVGDDLFTTNPKFIKQGINKKAANSTLIKLNQIGTLSETVEAITMTQKAGWTAVVSHRSGETEDTTIADLAVAFNTGQIKTGSMSRSDRIAKYNRLLQIESELDKNAVYDGLEAFYNLKK.

Residue glutamine 163 participates in (2R)-2-phosphoglycerate binding. Glutamate 205 functions as the Proton donor in the catalytic mechanism. Residues aspartate 258, glutamate 308, and aspartate 335 each coordinate Mg(2+). 4 residues coordinate (2R)-2-phosphoglycerate: lysine 360, arginine 389, serine 390, and lysine 411. Lysine 360 functions as the Proton acceptor in the catalytic mechanism.

The protein belongs to the enolase family. Requires Mg(2+) as cofactor.

It is found in the cytoplasm. It localises to the secreted. Its subcellular location is the cell surface. The enzyme catalyses (2R)-2-phosphoglycerate = phosphoenolpyruvate + H2O. It participates in carbohydrate degradation; glycolysis; pyruvate from D-glyceraldehyde 3-phosphate: step 4/5. Catalyzes the reversible conversion of 2-phosphoglycerate (2-PG) into phosphoenolpyruvate (PEP). It is essential for the degradation of carbohydrates via glycolysis. This is Enolase from Mycoplasma mycoides subsp. mycoides SC (strain CCUG 32753 / NCTC 10114 / PG1).